The chain runs to 1871 residues: Plexin-A3 (1871 aa).

The first 19 residues, 1 to 19 (MPSVCLLLLLFLAVGGALG), serve as a signal peptide directing secretion. A Sema domain is found at 20 to 488 (NRPFRAFVVT…SEKQVSQLPV (469 aa)). The Extracellular segment spans residues 20-1220 (NRPFRAFVVT…SAERALTLPA (1201 aa)). The N-linked (GlcNAc...) asparagine glycan is linked to asparagine 59. Cystine bridges form between cysteine 77–cysteine 86, cysteine 112–cysteine 120, cysteine 266–cysteine 387, cysteine 282–cysteine 338, cysteine 356–cysteine 375, cysteine 491–cysteine 508, cysteine 497–cysteine 539, cysteine 500–cysteine 517, and cysteine 511–cysteine 523. The N-linked (GlcNAc...) asparagine glycan is linked to asparagine 548. Residues cysteine 574 and cysteine 594 are joined by a disulfide bond. N-linked (GlcNAc...) asparagine glycans are attached at residues asparagine 637, asparagine 738, and asparagine 746. IPT/TIG domains are found at residues 840–933 (PRIT…YSFV), 935–1020 (PTFD…YTYT), 1023–1122 (PTVT…FTYY), and 1125–1211 (PSFE…LHIS). 5 N-linked (GlcNAc...) asparagine glycosylation sites follow: asparagine 1009, asparagine 1036, asparagine 1073, asparagine 1115, and asparagine 1162. The chain crosses the membrane as a helical span at residues 1221 to 1241 (MMGLAAGGGLLLLAITAVLVA). The Cytoplasmic segment spans residues 1242-1871 (YKRKTQDADR…QIISLVSSDS (630 aa)). A Phosphoserine modification is found at serine 1596.

It belongs to the plexin family. As to quaternary structure, interacts with CBFA2T3/MTG16.

Its subcellular location is the cell membrane. Coreceptor for SEMA3A and SEMA3F. Necessary for signaling by class 3 semaphorins and subsequent remodeling of the cytoskeleton. Plays a role in axon guidance in the developing nervous system. Regulates the migration of sympathetic neurons, but not of neural crest precursors. Required for normal dendrite spine morphology in pyramidal neurons. May play a role in regulating semaphorin-mediated programmed cell death in the developing nervous system. Class 3 semaphorins bind to a complex composed of a neuropilin and a plexin. The plexin modulates the affinity of the complex for specific semaphorins, and its cytoplasmic domain is required for the activation of down-stream signaling events in the cytoplasm. The protein is Plexin-A3 (PLXNA3) of Homo sapiens (Human).